A 186-amino-acid polypeptide reads, in one-letter code: METFSSKDLALQAQKKILSRMASKSMVNMFIDETSSEILDELYRVSKEYTKNKSESQKVIKNLIKIAVKIGVLFRHNRFSPEELVLAQDFKSKLHNGAMTAISFYEVEFTFEKDVLPDILMECKNLLLRLVEKHLTPKSHGRIQHVFNHFADPEMLCQLYDPKGSLWPHLQKICHGLNKLIDEGKL.

This sequence belongs to the TNFAIP8 family. TNFAIP8L2 subfamily.

Functionally, acts as a negative regulator of innate and adaptive immunity by maintaining immune homeostasis. Negative regulator of Toll-like receptor and T-cell receptor function. Prevents hyperresponsiveness of the immune system and maintains immune homeostasis. Inhibits jun/ap1 and NF-kappa-B activation. Promotes Fas-induced apoptosis. The polypeptide is Tumor necrosis factor alpha-induced protein 8-like protein 2 (tnfaip8l2) (Xenopus tropicalis (Western clawed frog)).